Consider the following 224-residue polypeptide: Deoxyribose-phosphate aldolase (224 aa).

Asp-93 functions as the Proton donor/acceptor in the catalytic mechanism. The active-site Schiff-base intermediate with acetaldehyde is Lys-159. Catalysis depends on Lys-189, which acts as the Proton donor/acceptor.

Belongs to the DeoC/FbaB aldolase family. DeoC type 1 subfamily.

It is found in the cytoplasm. The catalysed reaction is 2-deoxy-D-ribose 5-phosphate = D-glyceraldehyde 3-phosphate + acetaldehyde. Its pathway is carbohydrate degradation; 2-deoxy-D-ribose 1-phosphate degradation; D-glyceraldehyde 3-phosphate and acetaldehyde from 2-deoxy-alpha-D-ribose 1-phosphate: step 2/2. Catalyzes a reversible aldol reaction between acetaldehyde and D-glyceraldehyde 3-phosphate to generate 2-deoxy-D-ribose 5-phosphate. The sequence is that of Deoxyribose-phosphate aldolase from Mycobacterium bovis (strain ATCC BAA-935 / AF2122/97).